Here is a 210-residue protein sequence, read N- to C-terminus: Protein-L-isoaspartate O-methyltransferase (210 aa).

The active site involves S59.

The protein belongs to the methyltransferase superfamily. L-isoaspartyl/D-aspartyl protein methyltransferase family.

It localises to the cytoplasm. It catalyses the reaction [protein]-L-isoaspartate + S-adenosyl-L-methionine = [protein]-L-isoaspartate alpha-methyl ester + S-adenosyl-L-homocysteine. Its function is as follows. Catalyzes the methyl esterification of L-isoaspartyl residues in peptides and proteins that result from spontaneous decomposition of normal L-aspartyl and L-asparaginyl residues. It plays a role in the repair and/or degradation of damaged proteins. This Nitratidesulfovibrio vulgaris (strain ATCC 29579 / DSM 644 / CCUG 34227 / NCIMB 8303 / VKM B-1760 / Hildenborough) (Desulfovibrio vulgaris) protein is Protein-L-isoaspartate O-methyltransferase.